A 67-amino-acid polypeptide reads, in one-letter code: Disintegrin EC3A (67 aa).

A Disintegrin domain is found at 1 to 65; sequence NSVHPCCDPV…DCPRNRYKGK (65 aa). Disulfide bonds link Cys6–Cys29, Cys20–Cys26, Cys25–Cys50, and Cys38–Cys57. The short motif at 42–44 is the Cell attachment site; atypical (VGD) element; that stretch reads VGD.

This sequence belongs to the venom metalloproteinase (M12B) family. P-II subfamily. P-IIe sub-subfamily. In terms of assembly, heterodimer with EC3B; disulfide-linked. In terms of tissue distribution, expressed by the venom gland.

The protein resides in the secreted. Its function is as follows. Inhibits adhesion of cells expressing alpha-4/beta-1 (ITGA4/ITGB1) and alpha-4/beta-7 (ITGA4/ITGB7) integrins to the natural ligands vascular cell adhesion molecule 1 (VCAM-1) and mucosal addressin cell adhesion molecule 1 (MADCAM-1). It is also a weaker inhibitor of alpha-5/beta-1 (ITGA5/ITGB1) and alpha-2b/beta-3 (ITGA2B/ITGB3) integrins. The inhibitory activity of EC3 towards alpha-4 integrins is associated with the MLD sequence of EC3B subunit. The ability of EC3 to inhibit ITGA5/ITGB1 resides in both subunits A and B. The protein is Disintegrin EC3A of Echis carinatus (Saw-scaled viper).